The following is a 428-amino-acid chain: Histidine--tRNA ligase (428 aa).

Belongs to the class-II aminoacyl-tRNA synthetase family. In terms of assembly, homodimer.

Its subcellular location is the cytoplasm. It carries out the reaction tRNA(His) + L-histidine + ATP = L-histidyl-tRNA(His) + AMP + diphosphate + H(+). The sequence is that of Histidine--tRNA ligase from Mesomycoplasma hyopneumoniae (strain 232) (Mycoplasma hyopneumoniae).